Consider the following 275-residue polypeptide: NH(3)-dependent NAD(+) synthetase (275 aa).

46 to 53 (GISGGQDS) is an ATP binding site. Aspartate 52 provides a ligand contact to Mg(2+). Residue arginine 140 participates in deamido-NAD(+) binding. Threonine 160 serves as a coordination point for ATP. Glutamate 165 lines the Mg(2+) pocket. Deamido-NAD(+)-binding residues include lysine 173 and aspartate 180. ATP contacts are provided by lysine 189 and threonine 211. 260–261 (HK) provides a ligand contact to deamido-NAD(+).

Belongs to the NAD synthetase family. In terms of assembly, homodimer.

The enzyme catalyses deamido-NAD(+) + NH4(+) + ATP = AMP + diphosphate + NAD(+) + H(+). Its pathway is cofactor biosynthesis; NAD(+) biosynthesis; NAD(+) from deamido-NAD(+) (ammonia route): step 1/1. Its function is as follows. Catalyzes the ATP-dependent amidation of deamido-NAD to form NAD. Uses ammonia as a nitrogen source. The protein is NH(3)-dependent NAD(+) synthetase of Shigella boydii serotype 4 (strain Sb227).